A 287-amino-acid polypeptide reads, in one-letter code: Ribosomal RNA small subunit methyltransferase A (287 aa).

The S-adenosyl-L-methionine site is built by Asn18, Leu20, Gly45, Glu66, Asp91, and Asn118.

Belongs to the class I-like SAM-binding methyltransferase superfamily. rRNA adenine N(6)-methyltransferase family. RsmA subfamily.

It is found in the cytoplasm. The enzyme catalyses adenosine(1518)/adenosine(1519) in 16S rRNA + 4 S-adenosyl-L-methionine = N(6)-dimethyladenosine(1518)/N(6)-dimethyladenosine(1519) in 16S rRNA + 4 S-adenosyl-L-homocysteine + 4 H(+). In terms of biological role, specifically dimethylates two adjacent adenosines (A1518 and A1519) in the loop of a conserved hairpin near the 3'-end of 16S rRNA in the 30S particle. May play a critical role in biogenesis of 30S subunits. The protein is Ribosomal RNA small subunit methyltransferase A of Haemophilus influenzae (strain ATCC 51907 / DSM 11121 / KW20 / Rd).